The chain runs to 169 residues: Probable GPI-anchored adhesin-like protein PGA22 (169 aa).

An N-terminal signal peptide occupies residues 1–18 (MKYSTLAWLVIASYTVFA). N-linked (GlcNAc...) asparagine glycans are attached at residues N87, N104, N111, and N118. The GPI-anchor amidated glycine moiety is linked to residue G140. The propeptide at 141 to 169 (PALTTTTVAEAFSLAAGASLGYLVALLFL) is removed in mature form.

The protein resides in the cell membrane. Functionally, putative adhesin which may be involved in cell adhesion and virulence. In Candida albicans (strain SC5314 / ATCC MYA-2876) (Yeast), this protein is Probable GPI-anchored adhesin-like protein PGA22 (PGA22).